Reading from the N-terminus, the 420-residue chain is MKHPFQIIVADTTGRYLFTTVKNVLLVIDLTSGKLVGQWKDELDNSDFLKKKYEEKFDKENDSKRQKSESGQAKVSKIPTPGPGAPPIYNYIRALRLSSDEKYLFATTDSDKAVVIFTIDHSKDNCLELKKRQPFSKRPCALSVDEDRLVVADKFGDVYSIAIEDDQVVNEKELTPILGHVSMLSDVAIVSNDKKKFIITGDRDEHIRISNYPKSFVIKNFLFGHHEFVSCLHVPNFDQSLLISGGGDDYLCLWRWYEGQLVAKIELRELIAPFLTDSHLPPERFLTETSPKEISVARILTFTNKKTGLNILVVLCEQTKAVLLFEIDAKLSVRHLQTISYEDNVLDMCYIEATNTLISAHDSDKNQLFQQQKFDEETNNFTPTTETMDAVAELNPIDVNSRNDFLPLYYINTLRKRSEH.

Positions 59 to 68 are enriched in basic and acidic residues; it reads KENDSKRQKS. A disordered region spans residues 59–82; it reads KENDSKRQKSESGQAKVSKIPTPG. 4 WD repeats span residues 87-127, 179-220, 224-266, and 340-379; these read PIYN…DNCL, GHVS…VIKN, GHHE…AKIE, and SYED…EETN.

It belongs to the WD repeat TRM82 family. Forms a heterodimer with the catalytic subunit TRM8.

The protein localises to the nucleus. Its pathway is tRNA modification; N(7)-methylguanine-tRNA biosynthesis. Its function is as follows. Required for the formation of N(7)-methylguanine at position 46 (m7G46) in tRNA. In the complex, it is required to stabilize and induce conformational changes of the catalytic subunit. This Meyerozyma guilliermondii (strain ATCC 6260 / CBS 566 / DSM 6381 / JCM 1539 / NBRC 10279 / NRRL Y-324) (Yeast) protein is tRNA (guanine-N(7)-)-methyltransferase non-catalytic subunit TRM82.